Consider the following 358-residue polypeptide: 3-dehydroquinate synthase (358 aa).

NAD(+) contacts are provided by residues 70-75 (DGEQFK), 104-108 (GVIGD), 128-129 (TT), lysine 141, lysine 150, and 168-171 (CLHT). Zn(2+) contacts are provided by glutamate 183, histidine 246, and histidine 263.

The protein belongs to the sugar phosphate cyclases superfamily. Dehydroquinate synthase family. Co(2+) serves as cofactor. Requires Zn(2+) as cofactor. NAD(+) is required as a cofactor.

The protein localises to the cytoplasm. It carries out the reaction 7-phospho-2-dehydro-3-deoxy-D-arabino-heptonate = 3-dehydroquinate + phosphate. It functions in the pathway metabolic intermediate biosynthesis; chorismate biosynthesis; chorismate from D-erythrose 4-phosphate and phosphoenolpyruvate: step 2/7. In terms of biological role, catalyzes the conversion of 3-deoxy-D-arabino-heptulosonate 7-phosphate (DAHP) to dehydroquinate (DHQ). The sequence is that of 3-dehydroquinate synthase from Shewanella baltica (strain OS195).